A 408-amino-acid polypeptide reads, in one-letter code: RNA exonuclease 4 (408 aa).

A disordered region spans residues 27–70; it reads TKEKDVSNSKAHNSRSSQSPSSSLRSSSRIQRKSKHSQGVGQYM. Residues 40 to 55 show a composition bias toward low complexity; sequence SRSSQSPSSSLRSSSR. The Exonuclease domain occupies 131 to 292; sequence QYLAIDCEMV…YRLHKKEWER (162 aa). Residues 310-322 are compositionally biased toward basic and acidic residues; the sequence is PEHVLGKRGHDEK. The tract at residues 310 to 408 is disordered; it reads PEHVLGKRGH…GESWWEQPAA (99 aa). Residues 343–357 are compositionally biased toward gly residues; it reads GNGGGRQQFPGGGRK. Positions 372–384 are enriched in basic and acidic residues; the sequence is QRVDENGRGDGTS.

The protein belongs to the REXO4 family.

It localises to the nucleus. Exoribonuclease involved in ribosome biosynthesis. Involved in the processing of ITS1, the internal transcribed spacer localized between the 18S and 5.8S rRNAs. This is RNA exonuclease 4 (REX4) from Cryptococcus neoformans var. neoformans serotype D (strain B-3501A) (Filobasidiella neoformans).